Consider the following 113-residue polypeptide: UPF0342 protein SpyM3_0545 (113 aa).

This sequence belongs to the UPF0342 family.

The polypeptide is UPF0342 protein SpyM3_0545 (Streptococcus pyogenes serotype M3 (strain ATCC BAA-595 / MGAS315)).